Here is a 479-residue protein sequence, read N- to C-terminus: Anaerobic nitric oxide reductase flavorubredoxin (479 aa).

The interval 30-210 (LRGSSYNSYL…PFSRLVTPKI (181 aa)) is zinc metallo-hydrolase. Residues H79, E81, D83, H147, D166, and H227 each contribute to the Fe cation site. A Flavodoxin-like domain is found at 254–393 (ITIFYDTMSN…LCRQHGRDIA (140 aa)). FMN-binding positions include 260–264 (TMSNN) and 342–369 (AFGSHGWSGGAVDRLSTRLQDAGFEMSL). A Rubredoxin-like domain is found at 423-474 (GPKMQCSVCQWIYDPAQGEPLQDVAPGTPWSDVPDNFLCPECSLGKDVFDVL). Residues C428, C431, C461, and C464 each contribute to the Fe cation site.

It in the N-terminal section; belongs to the zinc metallo-hydrolase group 3 family. As to quaternary structure, homotetramer. The cofactor is Fe cation. It depends on FMN as a cofactor.

It localises to the cytoplasm. Its pathway is nitrogen metabolism; nitric oxide reduction. Anaerobic nitric oxide reductase; uses NADH to detoxify nitric oxide (NO), protecting several 4Fe-4S NO-sensitive enzymes. Has at least 2 reductase partners, only one of which (NorW, flavorubredoxin reductase) has been identified. NO probably binds to the di-iron center; electrons enter from the NorW at rubredoxin and are transferred sequentially to the FMN center and the di-iron center. Also able to function as an aerobic oxygen reductase. This chain is Anaerobic nitric oxide reductase flavorubredoxin, found in Salmonella choleraesuis (strain SC-B67).